Here is a 260-residue protein sequence, read N- to C-terminus: Small ribosomal subunit protein uS2 (260 aa).

The disordered stretch occupies residues 225-260; the sequence is KGQTQTEAAPNAQAAPEAAAPAEQPAEEAAAASSEG. A compositionally biased stretch (low complexity) spans 231-260; that stretch reads EAAPNAQAAPEAAAPAEQPAEEAAAASSEG.

It belongs to the universal ribosomal protein uS2 family.

The sequence is that of Small ribosomal subunit protein uS2 from Rhodopirellula baltica (strain DSM 10527 / NCIMB 13988 / SH1).